A 603-amino-acid polypeptide reads, in one-letter code: NADH-ubiquinone oxidoreductase chain 5 (603 aa).

17 helical membrane passes run 4 to 24 (YATMTTLALTSLIPPILTTFI), 38 to 58 (SIVASTFIISLFPTTMFLCLD), 87 to 107 (MMFIPVALFVTWSIMEFSLWY), 114 to 134 (INQFFKYLLIFLITMLILVTA), 140 to 160 (LFIGWEGVGIMSFLLIGWWYA), 171 to 191 (AILYNRIGDIGFILALAWFLL), 210 to 230 (LIPLLGFLLAAAGKSAQLGLH), 241 to 261 (TPVSALLHSSTMVVAGVFLLI), 272 to 292 (LAQTLTLCLGAITTLFAAVCA), 301 to 320 (IVAFSTSSQLGLMVATIGIG), 325 to 347 (AFLHICTHAFFKAMLFMCSGSII), 370 to 390 (STSLAIGSLALMGMPFLTGFY), 407 to 429 (WALSIILIATSLTSAYSTRMILL), 457 to 477 (LTIGSLFAGFFITNNILPTSV), 482 to 502 (IPLYLKLTALSITLLGLLTAL), 537 to 557 (IPYLGLLMSQNLPLLLLDLIW), and 582 to 602 (GLIKLYFLSFFFPLLLILLLI).

This sequence belongs to the complex I subunit 5 family. As to quaternary structure, core subunit of respiratory chain NADH dehydrogenase (Complex I) which is composed of 45 different subunits.

It is found in the mitochondrion inner membrane. It catalyses the reaction a ubiquinone + NADH + 5 H(+)(in) = a ubiquinol + NAD(+) + 4 H(+)(out). Functionally, core subunit of the mitochondrial membrane respiratory chain NADH dehydrogenase (Complex I) which catalyzes electron transfer from NADH through the respiratory chain, using ubiquinone as an electron acceptor. Essential for the catalytic activity and assembly of complex I. The protein is NADH-ubiquinone oxidoreductase chain 5 (MT-ND5) of Gorilla gorilla gorilla (Western lowland gorilla).